A 267-amino-acid polypeptide reads, in one-letter code: MPADLMEKNSSSPVAATPASMSNTPDKPKTASEHRKSSKPIMEKRRRARINESLGQLKTLILDALKKDSSRHSKLEKADILEMTVKHLRNLQRVQMTAALSTDPSVLGKYRAGFSECMNEVTRFLSTCEGVNTDVRTRLLGHLANCMNQINAMNYPTQPQIPAAAAPHPAYGQPLVQLQGAAPQSSPAPIACKMGGPPVEAAKVYGGFQLVPAPDGQFAFLITNPAFPHNGSVIPVYTNSNVGTALPPSVSPSVMPSVTADSVWRPW.

The segment at 1 to 45 (MPADLMEKNSSSPVAATPASMSNTPDKPKTASEHRKSSKPIMEKR) is disordered. Positions 8–25 (KNSSSPVAATPASMSNTP) are enriched in polar residues. A compositionally biased stretch (basic and acidic residues) spans 26–35 (DKPKTASEHR). A bHLH domain is found at 34 to 91 (HRKSSKPIMEKRRRARINESLGQLKTLILDALKKDSSRHSKLEKADILEMTVKHLRNL). Residues 110–143 (YRAGFSECMNEVTRFLSTCEGVNTDVRTRLLGHL) enclose the Orange domain. A WRPW motif motif is present at residues 264–267 (WRPW).

As to quaternary structure, transcription repression requires formation of a complex with a corepressor protein of the Groucho/TLE family. Interacts with the bHLH protein hes2, and binds DNA in the form of a heterodimer with the bHLH protein hey1/hrt1. Interacts with the bHLH protein hes6; this interaction may inhibit the transcriptional repressor activity.

The protein localises to the nucleus. Functionally, transcriptional repressor of a subset of early mesodermal genes including myod1 and t/bra. Binds DNA on N-box motifs: 5'-CACNAG-3'. Acts as a negative regulator of myogenesis, mediating Notch signaling to repress expression of myod1. The protein is Transcription factor HES-1 of Xenopus tropicalis (Western clawed frog).